Here is a 339-residue protein sequence, read N- to C-terminus: Serine/threonine-protein kinase SAPK2 (339 aa).

Positions 4-260 (YEVIKDIGSG…IPEIKNHPWF (257 aa)) constitute a Protein kinase domain. ATP contacts are provided by residues 10 to 18 (IGSGNFGVA) and Lys-33. The Proton acceptor role is filled by Asp-123. The tract at residues 253–339 (EIKNHPWFLK…EDSGDFVCAL (87 aa)) is C-terminal.

This sequence belongs to the protein kinase superfamily. Ser/Thr protein kinase family. In terms of processing, phosphorylated.

It catalyses the reaction L-seryl-[protein] + ATP = O-phospho-L-seryl-[protein] + ADP + H(+). It carries out the reaction L-threonyl-[protein] + ATP = O-phospho-L-threonyl-[protein] + ADP + H(+). In terms of biological role, may play a role in signal transduction of hyperosmotic response. Can phosphorylate BZIP46 in vitro. The polypeptide is Serine/threonine-protein kinase SAPK2 (SAPK2) (Oryza sativa subsp. indica (Rice)).